The following is a 199-amino-acid chain: MAAVTTDLIRELRERTSAGMMDCKKALEENNADIEKAITWLREKGIAKAAKKAGRETKEGRVVSYIHGNGKIGVLVELNSETDFVSKNEDFEALGKEICMQIAAMNPLYLNEESIPAADLEKEKTIMRSQLEAEGKKADQIEKILPGKIKKYVSEVCLVNQAFFKDDSKTIDDLVKEAIAKFGENITIARFIRFQVGGL.

The segment at 82-85 (TDFV) is involved in Mg(2+) ion dislocation from EF-Tu.

This sequence belongs to the EF-Ts family.

Its subcellular location is the cytoplasm. Associates with the EF-Tu.GDP complex and induces the exchange of GDP to GTP. It remains bound to the aminoacyl-tRNA.EF-Tu.GTP complex up to the GTP hydrolysis stage on the ribosome. The sequence is that of Elongation factor Ts from Leptospira interrogans serogroup Icterohaemorrhagiae serovar Lai (strain 56601).